Reading from the N-terminus, the 149-residue chain is Transcriptional regulator MraZ (149 aa).

SpoVT-AbrB domains follow at residues 6 to 52 (RSHR…PLPD) and 81 to 124 (AELM…DQGR).

It belongs to the MraZ family. As to quaternary structure, forms oligomers.

Its subcellular location is the cytoplasm. The protein resides in the nucleoid. The sequence is that of Transcriptional regulator MraZ from Nitratidesulfovibrio vulgaris (strain DSM 19637 / Miyazaki F) (Desulfovibrio vulgaris).